A 426-amino-acid chain; its full sequence is Serine--tRNA ligase (426 aa).

233 to 235 (TAE) contributes to the L-serine binding site. 264–266 (RSE) is a binding site for ATP. Position 287 (E287) interacts with L-serine. 351 to 354 (EISS) contributes to the ATP binding site. L-serine is bound at residue S387.

It belongs to the class-II aminoacyl-tRNA synthetase family. Type-1 seryl-tRNA synthetase subfamily. As to quaternary structure, homodimer. The tRNA molecule binds across the dimer.

The protein localises to the cytoplasm. The enzyme catalyses tRNA(Ser) + L-serine + ATP = L-seryl-tRNA(Ser) + AMP + diphosphate + H(+). It catalyses the reaction tRNA(Sec) + L-serine + ATP = L-seryl-tRNA(Sec) + AMP + diphosphate + H(+). It functions in the pathway aminoacyl-tRNA biosynthesis; selenocysteinyl-tRNA(Sec) biosynthesis; L-seryl-tRNA(Sec) from L-serine and tRNA(Sec): step 1/1. Its function is as follows. Catalyzes the attachment of serine to tRNA(Ser). Is also able to aminoacylate tRNA(Sec) with serine, to form the misacylated tRNA L-seryl-tRNA(Sec), which will be further converted into selenocysteinyl-tRNA(Sec). The protein is Serine--tRNA ligase of Clostridium botulinum (strain Okra / Type B1).